The primary structure comprises 248 residues: Protein GrpE (248 aa).

Residues 229-248 are disordered; it reads AAPKEDTLPAQENQSSPADS. Polar residues predominate over residues 238-248; sequence AQENQSSPADS.

Belongs to the GrpE family. Homodimer.

The protein resides in the cytoplasm. Functionally, participates actively in the response to hyperosmotic and heat shock by preventing the aggregation of stress-denatured proteins, in association with DnaK and GrpE. It is the nucleotide exchange factor for DnaK and may function as a thermosensor. Unfolded proteins bind initially to DnaJ; upon interaction with the DnaJ-bound protein, DnaK hydrolyzes its bound ATP, resulting in the formation of a stable complex. GrpE releases ADP from DnaK; ATP binding to DnaK triggers the release of the substrate protein, thus completing the reaction cycle. Several rounds of ATP-dependent interactions between DnaJ, DnaK and GrpE are required for fully efficient folding. This chain is Protein GrpE, found in Nostoc sp. (strain PCC 7120 / SAG 25.82 / UTEX 2576).